Reading from the N-terminus, the 182-residue chain is Ribulose bisphosphate carboxylase small subunit, chloroplastic 4 (182 aa).

The transit peptide at 1-41 (MAATMMNKTVVLSKGCTKPSAVPKVSINRKGFLNTAMNKKR) directs the protein to the chloroplast.

This sequence belongs to the RuBisCO small chain family. In terms of assembly, heterohexadecamer of 8 large and 8 small subunits.

It localises to the plastid. The protein localises to the chloroplast. Its function is as follows. RuBisCO catalyzes two reactions: the carboxylation of D-ribulose 1,5-bisphosphate, the primary event in carbon dioxide fixation, as well as the oxidative fragmentation of the pentose substrate. Both reactions occur simultaneously and in competition at the same active site. Although the small subunit is not catalytic it is essential for maximal activity. The sequence is that of Ribulose bisphosphate carboxylase small subunit, chloroplastic 4 from Acetabularia peniculus (Green alga).